The chain runs to 197 residues: Large ribosomal subunit protein bL9c (197 aa).

The N-terminal 42 residues, 1-42 (MASSTALSLSWSSSPCWSHSFNGGANETLKVSERRFNFEVVS), are a transit peptide targeting the chloroplast.

The protein belongs to the bacterial ribosomal protein bL9 family. In terms of assembly, part of the 50S ribosomal subunit.

It localises to the plastid. Its subcellular location is the chloroplast. Functionally, binds to the 23S rRNA. The sequence is that of Large ribosomal subunit protein bL9c (RPL9) from Arabidopsis thaliana (Mouse-ear cress).